Reading from the N-terminus, the 201-residue chain is MNEKIELSLCDVLSLSKTPGERVTSLFELMQDHGQSFYDESVTQLEHALQAAHLAKTSHATMEQITAALLHDIGHFLMDEHDEQNHFLAEDWQHETVGAQQLAPFFGKAVTEPIFLHVPAKRYLCSVNADYFNGLSRASQRSYELQGGLMTDAEIAEFEQNPFHHTAVLLRRWDDGAKVKGLKVPDLQEYHTEVESCLEHS.

6 residues coordinate Fe cation: His47, His71, Asp72, His94, His117, and Asp174.

It depends on Fe(2+) as a cofactor.

It catalyses the reaction hydroxymethylphosphonate + O2 = formate + phosphate + 2 H(+). The catalysed reaction is (1R)-(2-amino-1-hydroxyethyl)phosphonate + O2 = glycine + phosphate + 2 H(+). The enzyme catalyses (1R)-(1-hydroxyethyl)phosphonate + O2 = acetate + phosphate + 2 H(+). Part of an oxidative pathway for utilization of methylphosphonic acid as a phosphate source. Catalyzes the oxidation of hydroxymethylphosphonic acid to produce formate and phosphate. Can also use (1R)-(2-amino-1-hydroxyethyl)phosphonic acid and (R)-1-hydroxyethylphosphonic acid with similar catalytic efficiency. The chain is Hydroxymethylphosphonate dioxygenase from Gimesia maris (strain ATCC 29201 / DSM 8797 / 534-30) (Planctomyces maris).